The chain runs to 156 residues: Small ribosomal subunit protein uS7 (156 aa).

This sequence belongs to the universal ribosomal protein uS7 family. In terms of assembly, part of the 30S ribosomal subunit. Contacts proteins S9 and S11.

In terms of biological role, one of the primary rRNA binding proteins, it binds directly to 16S rRNA where it nucleates assembly of the head domain of the 30S subunit. Is located at the subunit interface close to the decoding center, probably blocks exit of the E-site tRNA. In Clostridium beijerinckii (strain ATCC 51743 / NCIMB 8052) (Clostridium acetobutylicum), this protein is Small ribosomal subunit protein uS7.